Reading from the N-terminus, the 438-residue chain is Delta(14)-sterol reductase ERG24 (438 aa).

Residues 1–13 are Lumenal-facing; it reads MVSALNPRTTEFE. The chain crosses the membrane as a helical span at residues 14–34; the sequence is FGGLIGALGISIGLPVFTIIL. Residues 35–71 are Cytoplasmic-facing; the sequence is NQMIRPDYFIKGFFQNFDIVELWNGIKPLRYYLGNRE. Residues 72–90 form a helical membrane-spanning segment; that stretch reads LWTVYCLWYGILAVLDVIL. Residues 91–109 are Lumenal-facing; sequence PGRVMKGVQLRDGSKLSYK. Residues 110–127 traverse the membrane as a helical segment; it reads INGIAMSTTLVLVLAIRW. Over 128–147 the chain is Cytoplasmic; sequence KLTDGQLPELQYLYENHVSL. A helical transmembrane segment spans residues 148–172; that stretch reads CIISILFSFFLATYCYVASFIPLIF. At 173-242 the chain is on the lumenal side; it reads KKNGNGKREK…LHHHYLKTGK (70 aa). Residues 243-263 form a helical membrane-spanning segment; sequence INDALVLVNFLQGFYIFDGVL. The Cytoplasmic portion of the chain corresponds to 264 to 308; sequence NEEGVLTMMDITTDGFGFMLAFGDLSLVPFTYSLQARYLSVSPVE. Residues 309–328 form a helical membrane-spanning segment; that stretch reads LGWVKVVGILAIMFLGFHIF. At 329-368 the chain is on the lumenal side; sequence HSANKQKSEFRQGKLENLKSIQTKRGTKLLCDGWWAKSQH. Residues K335, R339, L358, W363, 370 to 371, D410, 414 to 418, and Y425 contribute to the NADP(+) site; these read NY and CRLKY. The helical transmembrane segment at 369-387 threads the bilayer; sequence INYFGDWLISLSWCLATWF. Residues 388–438 lie on the Cytoplasmic side of the membrane; it reads QTPLTYYYSLYFATLLLHRQQRDEHKCRLKYGENWEEYERKVPYKIIPYVY.

It belongs to the ERG4/ERG24 family.

It localises to the membrane. The enzyme catalyses 4,4-dimethyl-5alpha-cholesta-8,24-dien-3beta-ol + NADP(+) = 4,4-dimethyl-5alpha-cholesta-8,14,24-trien-3beta-ol + NADPH + H(+). It participates in steroid biosynthesis; zymosterol biosynthesis; zymosterol from lanosterol: step 2/6. Its activity is regulated as follows. Inhibited by the morpholine antifungal drug fenpropimorph. Its function is as follows. Delta(14)-sterol reductase; part of the third module of ergosterol biosynthesis pathway that includes the late steps of the pathway. ERG24 reduces the C14=C15 double bond of 4,4-dimethyl-cholesta-8,14,24-trienol to produce 4,4-dimethyl-cholesta-8,24-dienol. The third module or late pathway involves the ergosterol synthesis itself through consecutive reactions that mainly occur in the endoplasmic reticulum (ER) membrane. Firstly, the squalene synthase ERG9 catalyzes the condensation of 2 farnesyl pyrophosphate moieties to form squalene, which is the precursor of all steroids. Squalene synthase is crucial for balancing the incorporation of farnesyl diphosphate (FPP) into sterol and nonsterol isoprene synthesis. Secondly, the squalene epoxidase ERG1 catalyzes the stereospecific oxidation of squalene to (S)-2,3-epoxysqualene, which is considered to be a rate-limiting enzyme in steroid biosynthesis. Then, the lanosterol synthase ERG7 catalyzes the cyclization of (S)-2,3 oxidosqualene to lanosterol, a reaction that forms the sterol core. In the next steps, lanosterol is transformed to zymosterol through a complex process involving various demethylation, reduction and desaturation reactions. The lanosterol 14-alpha-demethylase ERG11 (also known as CYP51) catalyzes C14-demethylation of lanosterol to produce 4,4'-dimethyl cholesta-8,14,24-triene-3-beta-ol, which is critical for ergosterol biosynthesis. The C-14 reductase ERG24 reduces the C14=C15 double bond of 4,4-dimethyl-cholesta-8,14,24-trienol to produce 4,4-dimethyl-cholesta-8,24-dienol. 4,4-dimethyl-cholesta-8,24-dienol is substrate of the C-4 demethylation complex ERG25-ERG26-ERG27 in which ERG25 catalyzes the three-step monooxygenation required for the demethylation of 4,4-dimethyl and 4alpha-methylsterols, ERG26 catalyzes the oxidative decarboxylation that results in a reduction of the 3-beta-hydroxy group at the C-3 carbon to an oxo group, and ERG27 is responsible for the reduction of the keto group on the C-3. ERG28 has a role as a scaffold to help anchor ERG25, ERG26 and ERG27 to the endoplasmic reticulum and ERG29 regulates the activity of the iron-containing C4-methylsterol oxidase ERG25. Then, the sterol 24-C-methyltransferase ERG6 catalyzes the methyl transfer from S-adenosyl-methionine to the C-24 of zymosterol to form fecosterol. The C-8 sterol isomerase ERG2 catalyzes the reaction which results in unsaturation at C-7 in the B ring of sterols and thus converts fecosterol to episterol. The sterol-C5-desaturase ERG3 then catalyzes the introduction of a C-5 double bond in the B ring to produce 5-dehydroepisterol. The C-22 sterol desaturase ERG5 further converts 5-dehydroepisterol into ergosta-5,7,22,24(28)-tetraen-3beta-ol by forming the C-22(23) double bond in the sterol side chain. Finally, ergosta-5,7,22,24(28)-tetraen-3beta-ol is substrate of the C-24(28) sterol reductase ERG4 to produce ergosterol. In Saccharomyces cerevisiae (strain ATCC 204508 / S288c) (Baker's yeast), this protein is Delta(14)-sterol reductase ERG24.